The following is a 217-amino-acid chain: Probable glutathione S-transferase DHAR4 (217 aa).

2 residues coordinate glutathione: Lys8 and Asp19. L-ascorbate contacts are provided by Lys8 and Asp19. Positions 10 to 85 constitute a GST N-terminal domain; sequence ASGAPDVLGD…DLIVGIIEEK (76 aa). Cys20 (nucleophile) is an active-site residue. Residues 20–25 carry the Glutathione-binding motif; the sequence is CPFGQR. Lys47, Ser75, His164, and Trp211 together coordinate glutathione. One can recognise a GST C-terminal domain in the interval 86–217; it reads YPEPSLVTFP…IASWAPKLDV (132 aa). Lys214 lines the L-ascorbate pocket.

The protein belongs to the GST superfamily. DHAR family. In terms of assembly, monomer.

Its subcellular location is the cytoplasm. The protein resides in the cytosol. It carries out the reaction RX + glutathione = an S-substituted glutathione + a halide anion + H(+). The catalysed reaction is L-dehydroascorbate + 2 glutathione = glutathione disulfide + L-ascorbate. Functionally, exhibits glutathione-dependent thiol transferase and dehydroascorbate (DHA) reductase activities. In Arabidopsis thaliana (Mouse-ear cress), this protein is Probable glutathione S-transferase DHAR4 (DHAR4).